The following is a 167-amino-acid chain: Stress-related protein (167 aa).

It belongs to the REF/SRPP family.

In terms of biological role, plays a role in plant defense. In Phaseolus vulgaris (Kidney bean), this protein is Stress-related protein (SRP).